A 494-amino-acid chain; its full sequence is Ketol-acid reductoisomerase (NADP(+)) (494 aa).

The 195-residue stretch at 14-208 (LDQLGRCRFM…GGHRAGCLES (195 aa)) folds into the KARI N-terminal Rossmann domain. NADP(+) contacts are provided by residues 45-48 (CGAQ), Arg68, Arg76, Ser78, and 108-110 (DKQ). The active site involves His132. Residue Gly158 participates in NADP(+) binding. KARI C-terminal knotted domains follow at residues 209–344 (SFVA…NYPE) and 345–487 (TDVE…MTDM). Positions 217, 221, 389, and 393 each coordinate Mg(2+). A substrate-binding site is contributed by Ser414.

Belongs to the ketol-acid reductoisomerase family. Mg(2+) is required as a cofactor.

It catalyses the reaction (2R)-2,3-dihydroxy-3-methylbutanoate + NADP(+) = (2S)-2-acetolactate + NADPH + H(+). The enzyme catalyses (2R,3R)-2,3-dihydroxy-3-methylpentanoate + NADP(+) = (S)-2-ethyl-2-hydroxy-3-oxobutanoate + NADPH + H(+). Its pathway is amino-acid biosynthesis; L-isoleucine biosynthesis; L-isoleucine from 2-oxobutanoate: step 2/4. It participates in amino-acid biosynthesis; L-valine biosynthesis; L-valine from pyruvate: step 2/4. Involved in the biosynthesis of branched-chain amino acids (BCAA). Catalyzes an alkyl-migration followed by a ketol-acid reduction of (S)-2-acetolactate (S2AL) to yield (R)-2,3-dihydroxy-isovalerate. In the isomerase reaction, S2AL is rearranged via a Mg-dependent methyl migration to produce 3-hydroxy-3-methyl-2-ketobutyrate (HMKB). In the reductase reaction, this 2-ketoacid undergoes a metal-dependent reduction by NADPH to yield (R)-2,3-dihydroxy-isovalerate. This is Ketol-acid reductoisomerase (NADP(+)) from Vibrio parahaemolyticus serotype O3:K6 (strain RIMD 2210633).